We begin with the raw amino-acid sequence, 450 residues long: UDP-N-acetylmuramoylalanine--D-glutamate ligase (450 aa).

118–124 provides a ligand contact to ATP; the sequence is GSNGKTT.

Belongs to the MurCDEF family.

It localises to the cytoplasm. It catalyses the reaction UDP-N-acetyl-alpha-D-muramoyl-L-alanine + D-glutamate + ATP = UDP-N-acetyl-alpha-D-muramoyl-L-alanyl-D-glutamate + ADP + phosphate + H(+). It functions in the pathway cell wall biogenesis; peptidoglycan biosynthesis. In terms of biological role, cell wall formation. Catalyzes the addition of glutamate to the nucleotide precursor UDP-N-acetylmuramoyl-L-alanine (UMA). The polypeptide is UDP-N-acetylmuramoylalanine--D-glutamate ligase (Halalkalibacterium halodurans (strain ATCC BAA-125 / DSM 18197 / FERM 7344 / JCM 9153 / C-125) (Bacillus halodurans)).